The following is a 426-amino-acid chain: Adenylosuccinate synthetase (426 aa).

GTP contacts are provided by residues 13–19 (GDEGKGK) and 41–43 (GHT). Catalysis depends on D14, which acts as the Proton acceptor. Residues D14 and G41 each contribute to the Mg(2+) site. IMP is bound by residues 14 to 17 (DEGK), 39 to 42 (NAGH), T129, R143, Q224, T239, and R303. H42 functions as the Proton donor in the catalytic mechanism. Substrate is bound at residue 299-305 (TTTGRPR). GTP contacts are provided by residues R305, 331-333 (KLD), and 414-416 (GTG).

The protein belongs to the adenylosuccinate synthetase family. Homodimer. Mg(2+) serves as cofactor.

Its subcellular location is the cytoplasm. It carries out the reaction IMP + L-aspartate + GTP = N(6)-(1,2-dicarboxyethyl)-AMP + GDP + phosphate + 2 H(+). Its pathway is purine metabolism; AMP biosynthesis via de novo pathway; AMP from IMP: step 1/2. In terms of biological role, plays an important role in the de novo pathway of purine nucleotide biosynthesis. Catalyzes the first committed step in the biosynthesis of AMP from IMP. In Caldicellulosiruptor bescii (strain ATCC BAA-1888 / DSM 6725 / KCTC 15123 / Z-1320) (Anaerocellum thermophilum), this protein is Adenylosuccinate synthetase.